Here is a 427-residue protein sequence, read N- to C-terminus: MFIDKAKIHLKSGKGGDGAVAFRKEKYVPAGGPAGGDGGKGGNIIFVVDEGMRTLMDFRYKMHYSAENGENGKGRMQYGKDGEDLILRVPPGTIIREEKTGHLVADLTQPKERRIIAKGGKGGKGNVHFKSATRQAPQFAIAGVKGEELTVTLELKLIADVGLVGFPNVGKSTLLSVVTSAKPKIADYHFTTLTPNLGVVRTKRGDSFVLADIPGLIEGAHEGTGLGHEFLRHVERTKLLIHVLDVAGIEGRDPLEDFEKINEELKLYNEKLSTRPQVVAANKTDVMGENENLKKLTEALAEKGIEVFPVSAATKQGLDELLDYVSIKLKELEDTEVELEEVEEEKLYELKEKDTNQFTVKKEDDTYIVEGDFLERLIMSTNFEDMDSLTYFQKVLRRKGIIDELKKLGIEDGEFVKIYDVEFEYFH.

In terms of domain architecture, Obg spans 1-158 (MFIDKAKIHL…LTVTLELKLI (158 aa)). The OBG-type G domain maps to 159 to 330 (ADVGLVGFPN…LLDYVSIKLK (172 aa)). GTP is bound by residues 165 to 172 (GFPNVGKS), 190 to 194 (FTTLT), 212 to 215 (DIPG), 282 to 285 (NKTD), and 311 to 313 (SAA). Residues serine 172 and threonine 192 each coordinate Mg(2+). Residues 347–427 (LYELKEKDTN…IYDVEFEYFH (81 aa)) form the OCT domain.

Belongs to the TRAFAC class OBG-HflX-like GTPase superfamily. OBG GTPase family. As to quaternary structure, monomer. Requires Mg(2+) as cofactor.

The protein resides in the cytoplasm. Functionally, an essential GTPase which binds GTP, GDP and possibly (p)ppGpp with moderate affinity, with high nucleotide exchange rates and a fairly low GTP hydrolysis rate. Plays a role in control of the cell cycle, stress response, ribosome biogenesis and in those bacteria that undergo differentiation, in morphogenesis control. In Alkaliphilus metalliredigens (strain QYMF), this protein is GTPase Obg.